A 212-amino-acid polypeptide reads, in one-letter code: Ribosomal RNA small subunit methyltransferase G (212 aa).

S-adenosyl-L-methionine contacts are provided by residues G80, L85, 131 to 132 (AE), and R146.

This sequence belongs to the methyltransferase superfamily. RNA methyltransferase RsmG family.

It localises to the cytoplasm. The enzyme catalyses guanosine(527) in 16S rRNA + S-adenosyl-L-methionine = N(7)-methylguanosine(527) in 16S rRNA + S-adenosyl-L-homocysteine. Functionally, specifically methylates the N7 position of guanine in position 527 of 16S rRNA. The protein is Ribosomal RNA small subunit methyltransferase G of Xylella fastidiosa (strain M23).